Consider the following 150-residue polypeptide: 3-hydroxyacyl-[acyl-carrier-protein] dehydratase FabZ (150 aa).

Histidine 52 is a catalytic residue.

Belongs to the thioester dehydratase family. FabZ subfamily.

The protein resides in the cytoplasm. It carries out the reaction a (3R)-hydroxyacyl-[ACP] = a (2E)-enoyl-[ACP] + H2O. Functionally, involved in unsaturated fatty acids biosynthesis. Catalyzes the dehydration of short chain beta-hydroxyacyl-ACPs and long chain saturated and unsaturated beta-hydroxyacyl-ACPs. In Albidiferax ferrireducens (strain ATCC BAA-621 / DSM 15236 / T118) (Rhodoferax ferrireducens), this protein is 3-hydroxyacyl-[acyl-carrier-protein] dehydratase FabZ.